The chain runs to 688 residues: Elongation factor G (688 aa).

Residues 8–282 (EKFRNIGIMA…AVVDFMPSPL (275 aa)) form the tr-type G domain. Residues 17–24 (AHIDAGKT), 81–85 (DTPGH), and 135–138 (NKMD) contribute to the GTP site. Residues 282–305 (LDIPPIKGTDPETGEETDRPADDN) are disordered.

Belongs to the TRAFAC class translation factor GTPase superfamily. Classic translation factor GTPase family. EF-G/EF-2 subfamily.

The protein localises to the cytoplasm. Catalyzes the GTP-dependent ribosomal translocation step during translation elongation. During this step, the ribosome changes from the pre-translocational (PRE) to the post-translocational (POST) state as the newly formed A-site-bound peptidyl-tRNA and P-site-bound deacylated tRNA move to the P and E sites, respectively. Catalyzes the coordinated movement of the two tRNA molecules, the mRNA and conformational changes in the ribosome. In Clostridium kluyveri (strain NBRC 12016), this protein is Elongation factor G.